A 92-amino-acid polypeptide reads, in one-letter code: YcgL domain-containing protein PBPRA1080 (92 aa).

Positions 1 to 84 (MLCSIYKSSK…PVTNLLHQYK (84 aa)) constitute a YcgL domain.

The protein is YcgL domain-containing protein PBPRA1080 of Photobacterium profundum (strain SS9).